Consider the following 164-residue polypeptide: MSSRDNDTSQSDHVPLDLTIEILSRLPAKSVGRFRSVSKLWSANTTSQNFINSFATGSLASRPSVLLTVRKGDILFVFSYPVDKNSSDGQFTCVGSYQLTNPNFGNLSRYHFLKWTQYRTKSYTSKMRNSIREVETVGDEVRLSDKYMYTMNVYPNHIESLVSL.

In terms of domain architecture, F-box spans serine 9–threonine 56.

The sequence is that of Putative F-box protein At1g59675 from Arabidopsis thaliana (Mouse-ear cress).